The following is a 571-amino-acid chain: 15-cis-phytoene desaturase, chloroplastic/chromoplastic (571 aa).

A chloroplast and chromoplast-targeting transit peptide spans 1–96; it reads MDTGCLSSMN…FRNSERPSKP (96 aa). FAD-binding positions include A107, 126 to 127, K134, 151 to 152, and Y157; these read EA and HI. R292 provides a ligand contact to substrate. The FAD site is built by I334 and D523. A531 contributes to the substrate binding site. M533 contributes to the FAD binding site.

It belongs to the carotenoid/retinoid oxidoreductase family. In terms of assembly, homotetramer. FAD is required as a cofactor.

It localises to the plastid. The protein localises to the chloroplast. The protein resides in the chromoplast. Its subcellular location is the membrane. The enzyme catalyses 2 a plastoquinone + 15-cis-phytoene = 9,9',15-tri-cis-zeta-carotene + 2 a plastoquinol. It participates in carotenoid biosynthesis; lycopene biosynthesis. Converts phytoene into zeta-carotene via the intermediary of phytofluene by the symmetrical introduction of two double bonds at the C-11 and C-11' positions of phytoene with a concomitant isomerization of two neighboring double bonds at the C9 and C9' positions from trans to cis. This chain is 15-cis-phytoene desaturase, chloroplastic/chromoplastic (PDS1), found in Zea mays (Maize).